Here is a 483-residue protein sequence, read N- to C-terminus: UDP-N-acetylmuramate--L-alanine ligase (483 aa).

Residue 128-134 (GTHGKTT) coordinates ATP.

The protein belongs to the MurCDEF family.

It is found in the cytoplasm. It carries out the reaction UDP-N-acetyl-alpha-D-muramate + L-alanine + ATP = UDP-N-acetyl-alpha-D-muramoyl-L-alanine + ADP + phosphate + H(+). It participates in cell wall biogenesis; peptidoglycan biosynthesis. In terms of biological role, cell wall formation. This chain is UDP-N-acetylmuramate--L-alanine ligase, found in Shewanella violacea (strain JCM 10179 / CIP 106290 / LMG 19151 / DSS12).